We begin with the raw amino-acid sequence, 158 residues long: C-type lectin BML-2 (158 aa).

The N-terminal stretch at 1–23 (MGHFTFTGLCLLAMFLSLRGAEC) is a signal peptide. Disulfide bonds link Cys26–Cys37, Cys54–Cys154, Cys61–Cys156, and Cys129–Cys146. Residues 33-155 (KNGLCYKVFS…CESLHPFLCQ (123 aa)) enclose the C-type lectin domain. Residues 119 to 121 (EPN) carry the Mannose-binding motif. Asn121 carries N-linked (GlcNAc...) asparagine glycosylation. Ca(2+) contacts are provided by Glu127, Asn142, and Asp143.

It belongs to the true venom lectin family. In terms of assembly, dimer. Probably non-covalently linked. In terms of tissue distribution, expressed by the venom gland.

It localises to the secreted. Recombinant C-type lectin BML-2 is able to agglutinate erythrocytes. May be a calcium-dependent lectin. This is C-type lectin BML-2 from Bungarus multicinctus (Many-banded krait).